The sequence spans 131 residues: Small ribosomal subunit protein uS12 (131 aa).

A 3-methylthioaspartic acid modification is found at Asp-89. Positions 106–131 (GVDGRKQGRSKYGAKKAKVAKTASAK) are disordered. Positions 112–124 (QGRSKYGAKKAKV) are enriched in basic residues.

This sequence belongs to the universal ribosomal protein uS12 family. As to quaternary structure, part of the 30S ribosomal subunit. Contacts proteins S8 and S17. May interact with IF1 in the 30S initiation complex.

Its function is as follows. With S4 and S5 plays an important role in translational accuracy. Functionally, interacts with and stabilizes bases of the 16S rRNA that are involved in tRNA selection in the A site and with the mRNA backbone. Located at the interface of the 30S and 50S subunits, it traverses the body of the 30S subunit contacting proteins on the other side and probably holding the rRNA structure together. The combined cluster of proteins S8, S12 and S17 appears to hold together the shoulder and platform of the 30S subunit. The protein is Small ribosomal subunit protein uS12 of Endomicrobium trichonymphae.